Consider the following 185-residue polypeptide: uncharacterized protein (185 aa).

The N-acetyltransferase domain occupies 9-169; sequence VILELAKESD…NGREDDKPLL (161 aa).

This is an uncharacterized protein from Bacillus subtilis (strain 168).